The primary structure comprises 95 residues: Acylphosphatase (95 aa).

The Acylphosphatase-like domain occupies 7–94 (AALVRITGRV…EAPAGFRITR (88 aa)). Catalysis depends on residues arginine 22 and asparagine 40. Positions 76-88 (VASEEASSAEAPA) are enriched in low complexity. Residues 76–95 (VASEEASSAEAPAGFRITRG) are disordered.

The protein belongs to the acylphosphatase family.

The enzyme catalyses an acyl phosphate + H2O = a carboxylate + phosphate + H(+). The protein is Acylphosphatase (acyP) of Rhizobium meliloti (strain 1021) (Ensifer meliloti).